The sequence spans 318 residues: Probable aminopeptidase YbaC (318 aa).

The Nucleophile role is filled by S115. Residue D266 is part of the active site. H296 functions as the Proton donor in the catalytic mechanism.

Belongs to the peptidase S33 family.

Functionally, probable aminopeptidase. The chain is Probable aminopeptidase YbaC (ybaC) from Bacillus subtilis (strain 168).